Here is a 291-residue protein sequence, read N- to C-terminus: Glycine--tRNA ligase alpha subunit (291 aa).

This sequence belongs to the class-II aminoacyl-tRNA synthetase family. As to quaternary structure, tetramer of two alpha and two beta subunits.

It is found in the cytoplasm. It carries out the reaction tRNA(Gly) + glycine + ATP = glycyl-tRNA(Gly) + AMP + diphosphate. This is Glycine--tRNA ligase alpha subunit from Geotalea uraniireducens (strain Rf4) (Geobacter uraniireducens).